The chain runs to 333 residues: Ketol-acid reductoisomerase (NADP(+)) (333 aa).

Residues 1–171 (MSNDTQPKIA…GGARANIIKT (171 aa)) enclose the KARI N-terminal Rossmann domain. Residues 14–17 (YGSQ), arginine 37, threonine 42, and 72–75 (DMVQ) each bind NADP(+). Residue histidine 97 is part of the active site. Position 123 (glycine 123) interacts with NADP(+). A KARI C-terminal knotted domain is found at 172 to 317 (TFKEETETDL…KKLRAKMVWL (146 aa)). Mg(2+) is bound by residues aspartate 180, glutamate 184, glutamate 216, and glutamate 220. Substrate is bound at residue serine 241.

It belongs to the ketol-acid reductoisomerase family. Mg(2+) serves as cofactor.

It catalyses the reaction (2R)-2,3-dihydroxy-3-methylbutanoate + NADP(+) = (2S)-2-acetolactate + NADPH + H(+). The catalysed reaction is (2R,3R)-2,3-dihydroxy-3-methylpentanoate + NADP(+) = (S)-2-ethyl-2-hydroxy-3-oxobutanoate + NADPH + H(+). Its pathway is amino-acid biosynthesis; L-isoleucine biosynthesis; L-isoleucine from 2-oxobutanoate: step 2/4. It functions in the pathway amino-acid biosynthesis; L-valine biosynthesis; L-valine from pyruvate: step 2/4. Its function is as follows. Involved in the biosynthesis of branched-chain amino acids (BCAA). Catalyzes an alkyl-migration followed by a ketol-acid reduction of (S)-2-acetolactate (S2AL) to yield (R)-2,3-dihydroxy-isovalerate. In the isomerase reaction, S2AL is rearranged via a Mg-dependent methyl migration to produce 3-hydroxy-3-methyl-2-ketobutyrate (HMKB). In the reductase reaction, this 2-ketoacid undergoes a metal-dependent reduction by NADPH to yield (R)-2,3-dihydroxy-isovalerate. The polypeptide is Ketol-acid reductoisomerase (NADP(+)) (Xanthomonas oryzae pv. oryzae (strain MAFF 311018)).